Reading from the N-terminus, the 1592-residue chain is Serine/threonine-protein kinase mrck-1 (1592 aa).

The interval 1 to 954 is involved in homo-dimerization; it reads MAEPPPDDSA…IFSPVSISAM (954 aa). In terms of domain architecture, Protein kinase spans 83 to 351; that stretch reads FEVLKVIGKG…LSDFQLHPFF (269 aa). ATP is bound by residues 89–97 and K112; that span reads IGKGAFGEV. D207 (proton acceptor) is an active-site residue. The region spanning 352 to 426 is the AGC-kinase C-terminal domain; that stretch reads EGIDWNTIRD…THGSLLSDAR (75 aa). S415 bears the Phosphoserine mark. Y416 carries the phosphotyrosine modification. Coiled-coil stretches lie at residues 444 to 782 and 811 to 871; these read ELME…KNNS and LDLQ…IENS. A compositionally biased stretch (polar residues) spans 782–796; sequence SPLTTSNYIQNTPSG. The segment at 782 to 801 is disordered; it reads SPLTTSNYIQNTPSGWGSRR. The interval 955-1534 is involved in binding to membranes, with a preference for di-phosphorylated phosphoinositides (PIPs); sequence ERGHNFERMK…FRTIGKDDRS (580 aa). The Phorbol-ester/DAG-type zinc finger occupies 957–1007; it reads GHNFERMKIKTPTKCGHCTSILIGLDRQGLFCQSCQYACHVSCAERVSQSC. H958, C971, C974, C988, C991, H996, C999, and C1007 together coordinate Zn(2+). The PH domain occupies 1026–1154; sequence GTAYEGLVKT…WVVALSELKT (129 aa). Residues 1181–1479 form the CNH domain; sequence IRVAQCCAII…KPLSGDGILS (299 aa). In terms of domain architecture, CRIB spans 1544-1557; sequence ISTPSDFMHIVHMG. Residues 1544-1557 are involved in interaction with cdc-42 (GTP-bound). Deletion prevents rescue of a null mutant; furthermore deleted form of mrck-1 is no longer recruited to the cell cortex and instead appears to be completely cytoplasmic; that stretch reads ISTPSDFMHIVHMG.

It belongs to the protein kinase superfamily. AGC Ser/Thr protein kinase family. DMPK subfamily. As to quaternary structure, homodimer, via N-terminal domains. Interacts (via the CRIB domain) with cdc-42 (GTP-bound), but with a lower affinity for cdc-42 bound to GDP; the interaction is direct and may play a role in the recruitment of mrck-1 to the apical membrane. Mg(2+) serves as cofactor. As to expression, expressed in embryonic and L4 larval seam cells and in embryonic dorsal and ventral epidermal cells. Also expressed in the pharynx throughout development and in sublateral nerve cords in the L4 larva.

It is found in the cytoplasm. It localises to the cell cortex. It carries out the reaction L-seryl-[protein] + ATP = O-phospho-L-seryl-[protein] + ADP + H(+). It catalyses the reaction L-threonyl-[protein] + ATP = O-phospho-L-threonyl-[protein] + ADP + H(+). Functionally, serine/threonine-protein kinase. Involved in regulating endoderm precursor cell movements during early gastrulation; activates apical myosin and thereby increases actomyosin contractility and tension in the apical cell cortex, probably as a result of recruitment of mrck-1 to the cortex by a combination of interaction with active cdc-42 and membrane binding. May phosphorylate and inactivate the phosphatase mel-11, and thereby contribute to the regulation of myosin II contractility during embryonic elongation. Involved in controlling canal length and Golgi/ER integrity during excretory canal elongation. The chain is Serine/threonine-protein kinase mrck-1 from Caenorhabditis elegans.